The chain runs to 829 residues: Protein Jade-1 (829 aa).

Positions 1-10 are enriched in polar residues; the sequence is MKRSRVPSTS. Residues 1–40 form a disordered region; that stretch reads MKRSRVPSTSEDSDNGSNSTSWSQHSNSKHRKQSGKRPSE. Over residues 15-26 the composition is skewed to low complexity; sequence NGSNSTSWSQHS. The segment at 196–246 adopts a PHD-type 1 zinc-finger fold; sequence DVVCDVCQSPDGEDGNEMVFCDKCNICVHQACYGILKVPEGSWLCRTCALG. Residues 248–282 form a C2HC pre-PHD-type zinc finger; that stretch reads FPKCHLCPKKGGAMKPTRSGTKWVHVSCALWIPEV. The segment at 306–362 adopts a PHD-type 2 zinc-finger fold; sequence LICCLCKEKTGACIQCSAKSCRVAFHVTCGLHCGLKMNTILTEADEVKFKSFCPKHS. 3 disordered regions span residues 368–408, 556–651, and 697–829; these read EEEG…PEET, PPVP…RRKS, and ATAP…VLAS. Residues 374–390 are compositionally biased toward basic and acidic residues; it reads DRPVKVPTREDRSRNRG. Polar residues-rich tracts occupy residues 394-405, 570-586, and 607-619; these read SASSQTRLSQNP, GQNS…NSYR, and SGDS…VMSA. The span at 622 to 648 shows a compositional bias: basic and acidic residues; sequence RRSEGRTRSGESHRKEEESERPLEDRR. A compositionally biased stretch (polar residues) spans 697–714; the sequence is ATAPNMYSGSPRKTNASH. Residues 738 to 754 are compositionally biased toward basic and acidic residues; sequence KRSERTSAGRQTERQEA. A compositionally biased stretch (low complexity) spans 762 to 774; sequence SSLKTFSTSPSSP. The span at 782–792 shows a compositional bias: basic and acidic residues; that stretch reads TGSENRRHLEE.

Belongs to the JADE family. As to quaternary structure, component of the HBO1 complex composed.

Its subcellular location is the nucleus. The protein localises to the chromosome. It is found in the cytoplasm. The protein resides in the cytoskeleton. It localises to the cilium basal body. Scaffold subunit of some HBO1 complexes, which have a histone H4 acetyltransferase activity. Plays a key role in HBO1 complex by directing KAT7/HBO1 specificity towards histone H4 acetylation (H4K5ac, H4K8ac and H4K12ac), regulating DNA replication initiation, regulating DNA replication initiation. This chain is Protein Jade-1 (jade1), found in Danio rerio (Zebrafish).